The primary structure comprises 199 residues: NAD(P)H dehydrogenase (quinone) (199 aa).

Residues 4–190 (ILVLYYSMYG…AIARFQGEHV (187 aa)) enclose the Flavodoxin-like domain. Residues 10-15 (SMYGHI) and 79-81 (TRF) contribute to the FMN site. Tyr12 lines the NAD(+) pocket. Position 99 (Trp99) interacts with substrate. Residues 114-119 (STGTGG) and His134 contribute to the FMN site.

It belongs to the WrbA family. Requires FMN as cofactor.

It carries out the reaction a quinone + NADH + H(+) = a quinol + NAD(+). The catalysed reaction is a quinone + NADPH + H(+) = a quinol + NADP(+). The chain is NAD(P)H dehydrogenase (quinone) from Yersinia enterocolitica serotype O:8 / biotype 1B (strain NCTC 13174 / 8081).